A 150-amino-acid polypeptide reads, in one-letter code: SsrA-binding protein (150 aa).

Belongs to the SmpB family.

It is found in the cytoplasm. Required for rescue of stalled ribosomes mediated by trans-translation. Binds to transfer-messenger RNA (tmRNA), required for stable association of tmRNA with ribosomes. tmRNA and SmpB together mimic tRNA shape, replacing the anticodon stem-loop with SmpB. tmRNA is encoded by the ssrA gene; the 2 termini fold to resemble tRNA(Ala) and it encodes a 'tag peptide', a short internal open reading frame. During trans-translation Ala-aminoacylated tmRNA acts like a tRNA, entering the A-site of stalled ribosomes, displacing the stalled mRNA. The ribosome then switches to translate the ORF on the tmRNA; the nascent peptide is terminated with the 'tag peptide' encoded by the tmRNA and targeted for degradation. The ribosome is freed to recommence translation, which seems to be the essential function of trans-translation. In Campylobacter jejuni (strain RM1221), this protein is SsrA-binding protein.